A 470-amino-acid chain; its full sequence is Annexin C1 (470 aa).

Residues 1–143 (MYGQQNNYGA…QGQSPMMYLG (143 aa)) are disordered. A compositionally biased stretch (low complexity) spans 15–34 (QWGQAPPQGYQPGYQNGPPA). Residues 82–92 (PQPPFGAPSPA) are compositionally biased toward pro residues. Composition is skewed to low complexity over residues 93 to 110 (PAGY…YGAP) and 128 to 138 (GYGSQPQGQSP). Annexin repeat units follow at residues 161-232 (YDAR…LLSL), 233-304 (GPLG…MALS), 316-388 (QLVQ…FIAR), and 395-468 (DGVV…GIIE).

Belongs to the annexin family.

Functionally, does not appear to play a major role in virulence. May play a role in titan cell formation. The protein is Annexin C1 of Cryptococcus neoformans var. grubii serotype A (strain H99 / ATCC 208821 / CBS 10515 / FGSC 9487) (Filobasidiella neoformans var. grubii).